Consider the following 170-residue polypeptide: Shikimate kinase (170 aa).

Position 15-20 (15-20 (GAGKTT)) interacts with ATP. Thr-19 serves as a coordination point for Mg(2+). Positions 37, 61, and 83 each coordinate substrate. Residue Arg-121 coordinates ATP. Substrate is bound at residue Arg-140.

This sequence belongs to the shikimate kinase family. In terms of assembly, monomer. Mg(2+) serves as cofactor.

Its subcellular location is the cytoplasm. The catalysed reaction is shikimate + ATP = 3-phosphoshikimate + ADP + H(+). Its pathway is metabolic intermediate biosynthesis; chorismate biosynthesis; chorismate from D-erythrose 4-phosphate and phosphoenolpyruvate: step 5/7. Functionally, catalyzes the specific phosphorylation of the 3-hydroxyl group of shikimic acid using ATP as a cosubstrate. The sequence is that of Shikimate kinase from Neisseria gonorrhoeae (strain ATCC 700825 / FA 1090).